We begin with the raw amino-acid sequence, 284 residues long: NAD kinase (284 aa).

Aspartate 70 (proton acceptor) is an active-site residue. Residues 70 to 71 (DG), 139 to 140 (NE), lysine 167, aspartate 169, leucine 177, 180 to 185 (TAYNLS), and glutamine 236 contribute to the NAD(+) site.

Belongs to the NAD kinase family. The cofactor is a divalent metal cation.

The protein localises to the cytoplasm. The enzyme catalyses NAD(+) + ATP = ADP + NADP(+) + H(+). Functionally, involved in the regulation of the intracellular balance of NAD and NADP, and is a key enzyme in the biosynthesis of NADP. Catalyzes specifically the phosphorylation on 2'-hydroxyl of the adenosine moiety of NAD to yield NADP. The chain is NAD kinase from Helicobacter pylori (strain J99 / ATCC 700824) (Campylobacter pylori J99).